The sequence spans 309 residues: Probable manganese-dependent inorganic pyrophosphatase (309 aa).

Mn(2+) contacts are provided by His9, Asp13, Asp15, Asp75, His97, and Asp149.

It belongs to the PPase class C family. Mn(2+) serves as cofactor.

It is found in the cytoplasm. It catalyses the reaction diphosphate + H2O = 2 phosphate + H(+). The chain is Probable manganese-dependent inorganic pyrophosphatase from Bacillus licheniformis (strain ATCC 14580 / DSM 13 / JCM 2505 / CCUG 7422 / NBRC 12200 / NCIMB 9375 / NCTC 10341 / NRRL NRS-1264 / Gibson 46).